The sequence spans 105 residues: UPF0145 protein CCNA_02462 (105 aa).

Belongs to the UPF0145 family.

The protein is UPF0145 protein CCNA_02462 of Caulobacter vibrioides (strain NA1000 / CB15N) (Caulobacter crescentus).